Reading from the N-terminus, the 532-residue chain is Cytochrome P450 12b1, mitochondrial (532 aa).

Cysteine 480 contributes to the heme binding site.

Belongs to the cytochrome P450 family. The cofactor is heme.

It localises to the mitochondrion. Probably involved in steroid hormones biosynthesis. The chain is Cytochrome P450 12b1, mitochondrial (Cyp12b1) from Drosophila acanthoptera (Fruit fly).